The sequence spans 252 residues: Receptor expression-enhancing protein 2 (252 aa).

Transmembrane regions (helical) follow at residues 1–21 and 35–55; these read MVSW…YPAY and YVKW…ETLT. Ser-150 carries the phosphoserine modification. The tract at residues 165-252 is disordered; the sequence is LQRPDGRLRP…KKTSGGGDSA (88 aa). The span at 203 to 217 shows a compositional bias: basic and acidic residues; sequence SRTEASEDDMGDKAP.

The protein belongs to the DP1 family. As to quaternary structure, interacts with odorant receptor proteins. Detected in brain, heart and skeletal muscle, and at low levels in placenta, kidney and pancreas. Expressed in circumvallate papillae.

Its subcellular location is the membrane. Required for endoplasmic reticulum (ER) network formation, shaping and remodeling. May enhance the cell surface expression of odorant receptors. The polypeptide is Receptor expression-enhancing protein 2 (REEP2) (Homo sapiens (Human)).